We begin with the raw amino-acid sequence, 579 residues long: Folliculin (579 aa).

The tract at residues 30-81 (PQGDGNEDSPGQGEQAEEEEGGIQMNSRMRAHSPAEGASVESSSPGPKKSDM) is disordered. A phosphoserine mark is found at serine 62 and serine 73. Residues 86-242 (RSLAAGHPGY…RNGNAARSLT (157 aa)) form the uDENN FLCN/SMCR8-type domain. The interval 210–220 (AEQFGCPQRAQ) is essential for interaction with LDHA. A coiled-coil region spans residues 287-310 (EKLADLEEESESWDNSEAEEEEKA). A compositionally biased stretch (acidic residues) spans 294–308 (EESESWDNSEAEEEE). The tract at residues 294–337 (EESESWDNSEAEEEEKAPVLPESTEGRELTQGPAESSSLSGCGS) is disordered. Position 302 is a phosphoserine (serine 302). Residues 326 to 336 (PAESSSLSGCG) are compositionally biased toward polar residues. The cDENN FLCN/SMCR8-type domain maps to 339-491 (QPRKLPVFKS…ILNKIEAALT (153 aa)). Serine 406, serine 537, and serine 542 each carry phosphoserine; by ULK1. One can recognise a dDENN FLCN/SMCR8-type domain in the interval 493-558 (QNLSVDVVDQ…LLKFWMTGLS (66 aa)). A Phosphoserine modification is found at serine 571.

The protein belongs to the folliculin family. In terms of assembly, interacts (via C-terminus) with FNIP1 or FNIP2 (via C-terminus). Component of the lysosomal folliculin complex (LFC), composed of FLCN, FNIP1 (or FNIP2), RagA/RRAGA or RagB/RRAGB GDP-bound, RagC/RRAGC or RagD/RRAGD GTP-bound, and Ragulator. Interaction with FNIP1 or FNIP2 mediates indirect interaction with the PRKAA1, PRKAB1 and PRKAG1 subunits of 5'-AMP-activated protein kinase (AMPK). Interacts with HSP90AA1 in the presence of FNIP1. Interacts with HSP70, STUB1, CDC37, AHSA1, CCT2, STIP1, PTGES3 and PPP5C. Interacts with GABARAP; interaction takes place in the presence of FNIP1 and/or FNIP2. Interacts with RILP; the interaction is direct and promotes association between RILP and RAB34. Interacts with KIF3A and KIF3B. Interacts with lactate dehydrogenase LDHA, but not LDHB; the interaction is direct, may preferentially bind LDHA dimers rather than tetramers, and regulates LDHA activity, acting as an uncompetitive inhibitor. Post-translationally, phosphorylation by ULK1 modulates the interaction with GABARAP and is required to regulate autophagy. Expressed in most tissues tested, including skin, lung, kidney, heart, testis and stomach.

The protein resides in the lysosome membrane. Its subcellular location is the cytoplasm. It localises to the cytosol. It is found in the cell projection. The protein localises to the cilium. The protein resides in the cytoskeleton. Its subcellular location is the microtubule organizing center. It localises to the centrosome. It is found in the spindle. The protein localises to the nucleus. Its activity is regulated as follows. GTPase-activating activity is inhibited in the folliculin complex (LFC), which stabilizes the GDP-bound state of RagA/RRAGA (or RagB/RRAGB), because Arg-164 is located far from the RagC/RRAGC or RagD/RRAGD nucleotide pocket. Disassembly of the LFC complex upon amino acid restimulation liberates the GTPase-activating activity. Its function is as follows. Multi-functional protein, involved in both the cellular response to amino acid availability and in the regulation of glycolysis. GTPase-activating protein that plays a key role in the cellular response to amino acid availability through regulation of the non-canonical mTORC1 signaling cascade controlling the MiT/TFE factors TFEB and TFE3. Activates mTORC1 by acting as a GTPase-activating protein: specifically stimulates GTP hydrolysis by RagC/RRAGC or RagD/RRAGD, promoting the conversion to the GDP-bound state of RagC/RRAGC or RagD/RRAGD, and thereby activating the kinase activity of mTORC1. The GTPase-activating activity is inhibited during starvation and activated in presence of nutrients. Acts as a key component for non-canonical mTORC1-dependent control of the MiT/TFE factors TFEB and TFE3, while it is not involved in mTORC1-dependent phosphorylation of canonical RPS6KB1/S6K1 and EIF4EBP1/4E-BP1. In low-amino acid conditions, the lysosomal folliculin complex (LFC) is formed on the membrane of lysosomes, which inhibits the GTPase-activating activity of FLCN, inactivates mTORC1 and maximizes nuclear translocation of TFEB and TFE3. Upon amino acid restimulation, RagA/RRAGA (or RagB/RRAGB) nucleotide exchange promotes disassembly of the LFC complex and liberates the GTPase-activating activity of FLCN, leading to activation of mTORC1 and subsequent cytoplasmic retention of TFEB and TFE3. Indirectly acts as a positive regulator of Wnt signaling by promoting mTOR-dependent cytoplasmic retention of MiT/TFE factor TFE3. Required for the exit of hematopoietic stem cell from pluripotency by promoting mTOR-dependent cytoplasmic retention of TFE3, thereby increasing Wnt signaling. Acts as an inhibitor of browning of adipose tissue by regulating mTOR-dependent cytoplasmic retention of TFE3. Involved in the control of embryonic stem cells differentiation; together with LAMTOR1 it is necessary to recruit and activate RagC/RRAGC and RagD/RRAGD at the lysosomes, and to induce exit of embryonic stem cells from pluripotency via non-canonical, mTOR-independent TFE3 inactivation. In response to flow stress, regulates STK11/LKB1 accumulation and mTORC1 activation through primary cilia: may act by recruiting STK11/LKB1 to primary cilia for activation of AMPK resided at basal bodies, causing mTORC1 down-regulation. Together with FNIP1 and/or FNIP2, regulates autophagy: following phosphorylation by ULK1, interacts with GABARAP and promotes autophagy. Required for starvation-induced perinuclear clustering of lysosomes by promoting association of RILP with its effector RAB34. Regulates glycolysis by binding to lactate dehydrogenase LDHA, acting as an uncompetitive inhibitor. This is Folliculin from Homo sapiens (Human).